A 196-amino-acid chain; its full sequence is Proteasome subunit beta 1 (196 aa).

A propeptide spans 1–6 (removed in mature form; by autocatalysis); sequence MEELPA. The active-site Nucleophile is the T7.

The protein belongs to the peptidase T1B family. As to quaternary structure, the 20S proteasome core is composed of 14 alpha and 14 beta subunits that assemble into four stacked heptameric rings, resulting in a barrel-shaped structure. The two inner rings, each composed of seven catalytic beta subunits, are sandwiched by two outer rings, each composed of seven alpha subunits. The catalytic chamber with the active sites is on the inside of the barrel. Has a gated structure, the ends of the cylinder being occluded by the N-termini of the alpha-subunits. Is capped at one or both ends by the proteasome regulatory ATPase, PAN.

It localises to the cytoplasm. The catalysed reaction is Cleavage of peptide bonds with very broad specificity.. With respect to regulation, the formation of the proteasomal ATPase PAN-20S proteasome complex, via the docking of the C-termini of PAN into the intersubunit pockets in the alpha-rings, triggers opening of the gate for substrate entry. Interconversion between the open-gate and close-gate conformations leads to a dynamic regulation of the 20S proteasome proteolysis activity. In terms of biological role, component of the proteasome core, a large protease complex with broad specificity involved in protein degradation. This Saccharolobus solfataricus (strain ATCC 35092 / DSM 1617 / JCM 11322 / P2) (Sulfolobus solfataricus) protein is Proteasome subunit beta 1.